The following is a 173-amino-acid chain: Alpha-crystallin A chain (173 aa).

N-acetylmethionine is present on Met1. Positions 1–63 (MDIAIQHPWF…RTVLDSGISE (63 aa)) are required for complex formation with BFSP1 and BFSP2. At Gln6 the chain carries Deamidated glutamine; partial. Ser45 is modified (phosphoserine). Gln50 bears the Deamidated glutamine; partial mark. Residues 52–162 (LFRTVLDSGI…GHSERAIPVS (111 aa)) form the sHSP domain. At Lys70 the chain carries N6-acetyllysine. Position 90 is a deamidated glutamine; partial (Gln90). Lys99 carries the N6-acetyllysine modification. His100 provides a ligand contact to Zn(2+). Residue Asn101 is modified to Deamidated asparagine; partial. Residues Glu102 and His107 each coordinate Zn(2+). Ser122 carries the phosphoserine modification. Asn123 is subject to Deamidated asparagine; partial. Positions 144–173 (PKVPSGVDAGHSERAIPVSREEKPSSAPSS) are disordered. Residues 153–167 (GHSERAIPVSREEKP) are compositionally biased toward basic and acidic residues. Residue His154 coordinates Zn(2+). Ser162 is a glycosylation site (O-linked (GlcNAc) serine).

Belongs to the small heat shock protein (HSP20) family. As to quaternary structure, heteromer composed of three CRYAA and one CRYAB subunits. Inter-subunit bridging via zinc ions enhances stability, which is crucial as there is no protein turn over in the lens. Can also form homodimers and homotetramers (dimers of dimers) which serve as the building blocks of homooligomers. Within homooligomers, the zinc-binding motif is created from residues of 3 different molecules. His-100 and Glu-102 from one molecule are ligands of the zinc ion, and His-107 and His-154 residues from additional molecules complete the site with tetrahedral coordination geometry. Part of a complex required for lens intermediate filament formation composed of BFSP1, BFSP2 and CRYAA. In terms of processing, acetylation at Lys-70 may increase chaperone activity. Undergoes age-dependent proteolytical cleavage at the C-terminus.

Its subcellular location is the cytoplasm. The protein localises to the nucleus. Contributes to the transparency and refractive index of the lens. Acts as a chaperone, preventing aggregation of various proteins under a wide range of stress conditions. Required for the correct formation of lens intermediate filaments as part of a complex composed of BFSP1, BFSP2 and CRYAA. This chain is Alpha-crystallin A chain (CRYAA), found in Pteropus poliocephalus (Grey-headed flying fox).